The sequence spans 454 residues: uncharacterized protein (454 aa).

Glycine 125–threonine 132 is an ATP binding site.

This sequence belongs to the AFG1 ATPase family.

This is an uncharacterized protein from Schizosaccharomyces pombe (strain 972 / ATCC 24843) (Fission yeast).